Consider the following 126-residue polypeptide: Histone H2B type 1-O (126 aa).

The span at methionine 1–lysine 12 shows a compositional bias: low complexity. A disordered region spans residues methionine 1–lysine 35. An N-acetylproline; partial modification is found at proline 2. Lysine 6 is modified (N6-(2-hydroxyisobutyryl)lysine; alternate). At lysine 6 the chain carries N6-(beta-hydroxybutyryl)lysine; alternate. At lysine 6 the chain carries N6-acetyllysine; alternate. Lysine 6 is modified (N6-butyryllysine; alternate). The residue at position 6 (lysine 6) is an N6-crotonyllysine; alternate. Lysine 6 bears the N6-lactoyllysine; alternate mark. Residue lysine 6 forms a Glycyl lysine isopeptide (Lys-Gly) (interchain with G-Cter in SUMO2); alternate linkage. ADP-ribosylserine is present on serine 7. The residue at position 12 (lysine 12) is an N6-(beta-hydroxybutyryl)lysine; alternate. N6-acetyllysine; alternate occurs at positions 12 and 13. N6-crotonyllysine; alternate is present on residues lysine 12 and lysine 13. Position 12 is an N6-lactoyllysine; alternate (lysine 12). Lysine 13 carries the N6-(2-hydroxyisobutyryl)lysine; alternate modification. Residue serine 15 is modified to Phosphoserine; by STK4/MST1. An N6-acetyllysine; alternate mark is found at lysine 16, lysine 17, lysine 21, and lysine 24. Residues lysine 16, lysine 17, lysine 21, and lysine 24 each carry the N6-crotonyllysine; alternate modification. 4 positions are modified to N6-lactoyllysine; alternate: lysine 16, lysine 17, lysine 21, and lysine 24. An N6-(beta-hydroxybutyryl)lysine; alternate mark is found at lysine 17 and lysine 21. Lysine 17 is subject to N6-glutaryllysine; alternate. Residues lysine 21 and lysine 24 each carry the N6-(2-hydroxyisobutyryl)lysine; alternate modification. Position 21 is an N6-butyryllysine; alternate (lysine 21). Lysine 21 participates in a covalent cross-link: Glycyl lysine isopeptide (Lys-Gly) (interchain with G-Cter in SUMO2); alternate. Residue lysine 25 is modified to N6-(2-hydroxyisobutyryl)lysine. Lysine 35 carries the N6-(2-hydroxyisobutyryl)lysine; alternate modification. An N6-(beta-hydroxybutyryl)lysine; alternate modification is found at lysine 35. Residue lysine 35 is modified to N6-crotonyllysine; alternate. Lysine 35 carries the post-translational modification N6-glutaryllysine; alternate. At lysine 35 the chain carries N6-succinyllysine; alternate. Lysine 35 participates in a covalent cross-link: Glycyl lysine isopeptide (Lys-Gly) (interchain with G-Cter in ubiquitin); alternate. Glutamate 36 carries the polyADP-ribosyl glutamic acid modification. At serine 37 the chain carries Phosphoserine; by AMPK. An N6-(2-hydroxyisobutyryl)lysine; alternate mark is found at lysine 44, lysine 47, and lysine 58. N6-lactoyllysine; alternate is present on lysine 44. 2 positions are modified to N6-glutaryllysine; alternate: lysine 44 and lysine 47. Position 47 is an N6-methyllysine; alternate (lysine 47). Lysine 58 carries the post-translational modification N6,N6-dimethyllysine; alternate. Residue arginine 80 is modified to Dimethylated arginine. Position 86 is an N6-(2-hydroxyisobutyryl)lysine; alternate (lysine 86). At lysine 86 the chain carries N6-(beta-hydroxybutyryl)lysine; alternate. Lysine 86 bears the N6-acetyllysine; alternate mark. Residue lysine 86 is modified to N6-lactoyllysine; alternate. Residue lysine 86 is modified to N6,N6,N6-trimethyllysine; alternate. Arginine 87 and arginine 93 each carry omega-N-methylarginine. An N6-(2-hydroxyisobutyryl)lysine; alternate modification is found at lysine 109. Lysine 109 carries the post-translational modification N6-lactoyllysine; alternate. Position 109 is an N6-glutaryllysine; alternate (lysine 109). Lysine 109 is modified (N6-methyllysine; alternate). O-linked (GlcNAc) serine glycosylation occurs at serine 113. Threonine 116 is modified (phosphothreonine). N6-(2-hydroxyisobutyryl)lysine; alternate occurs at positions 117 and 121. N6-(beta-hydroxybutyryl)lysine; alternate is present on residues lysine 117 and lysine 121. Residues lysine 117 and lysine 121 each carry the N6-lactoyllysine; alternate modification. N6-glutaryllysine; alternate is present on residues lysine 117 and lysine 121. 2 positions are modified to N6-succinyllysine; alternate: lysine 117 and lysine 121. Position 117 is an N6-malonyllysine; alternate (lysine 117). The residue at position 117 (lysine 117) is an N6-methylated lysine; alternate. Lysine 121 participates in a covalent cross-link: Glycyl lysine isopeptide (Lys-Gly) (interchain with G-Cter in ubiquitin); alternate.

It belongs to the histone H2B family. The nucleosome is a histone octamer containing two molecules each of H2A, H2B, H3 and H4 assembled in one H3-H4 heterotetramer and two H2A-H2B heterodimers. The octamer wraps approximately 147 bp of DNA. Monoubiquitination at Lys-35 (H2BK34Ub) by the MSL1/MSL2 dimer is required for histone H3 'Lys-4' (H3K4me) and 'Lys-79' (H3K79me) methylation and transcription activation at specific gene loci, such as HOXA9 and MEIS1 loci. Similarly, monoubiquitination at Lys-121 (H2BK120Ub) by the RNF20/40 complex gives a specific tag for epigenetic transcriptional activation and is also prerequisite for histone H3 'Lys-4' and 'Lys-79' methylation. It also functions cooperatively with the FACT dimer to stimulate elongation by RNA polymerase II. H2BK120Ub also acts as a regulator of mRNA splicing: deubiquitination by USP49 is required for efficient cotranscriptional splicing of a large set of exons. In terms of processing, phosphorylation at Ser-37 (H2BS36ph) by AMPK in response to stress promotes transcription. Phosphorylated on Ser-15 (H2BS14ph) by STK4/MST1 during apoptosis; which facilitates apoptotic chromatin condensation. Also phosphorylated on Ser-15 in response to DNA double strand breaks (DSBs), and in correlation with somatic hypermutation and immunoglobulin class-switch recombination. Post-translationally, glcNAcylation at Ser-113 promotes monoubiquitination of Lys-121. It fluctuates in response to extracellular glucose, and associates with transcribed genes. ADP-ribosylated by PARP1 or PARP2 on Ser-7 (H2BS6ADPr) in response to DNA damage. H2BS6ADPr promotes recruitment of CHD1L. Poly ADP-ribosylation on Glu-36 (H2BE35ADPr) by PARP1 regulates adipogenesis: it inhibits phosphorylation at Ser-37 (H2BS36ph), thereby blocking expression of pro-adipogenetic genes. In terms of processing, crotonylation (Kcr) is specifically present in male germ cells and marks testis-specific genes in post-meiotic cells, including X-linked genes that escape sex chromosome inactivation in haploid cells. Crotonylation marks active promoters and enhancers and confers resistance to transcriptional repressors. It is also associated with post-meiotically activated genes on autosomes. Post-translationally, lactylated in macrophages by EP300/P300 by using lactoyl-CoA directly derived from endogenous or exogenous lactate, leading to stimulates gene transcription.

It localises to the nucleus. The protein resides in the chromosome. Its function is as follows. Core component of nucleosome. Nucleosomes wrap and compact DNA into chromatin, limiting DNA accessibility to the cellular machineries which require DNA as a template. Histones thereby play a central role in transcription regulation, DNA repair, DNA replication and chromosomal stability. DNA accessibility is regulated via a complex set of post-translational modifications of histones, also called histone code, and nucleosome remodeling. The polypeptide is Histone H2B type 1-O (Homo sapiens (Human)).